Reading from the N-terminus, the 378-residue chain is TelA-like protein SAV1406 (378 aa).

Belongs to the TelA family.

The sequence is that of TelA-like protein SAV1406 from Staphylococcus aureus (strain Mu50 / ATCC 700699).